A 352-amino-acid polypeptide reads, in one-letter code: MKKIVFTGGGSAGHVTPNLAIIPYLQEDNWDISYIGSHQGIEKTIIEKEGIPYYSISSGKLRRYFDLKNIKDPFLVMKGVMDAYVRIRKLKPDVIFSKGGFVSVPVVIGGWLNRVPVLLHESDMTPGLANKIALRFASKIFVTFEEAAKHLPKEKVIYTGSPVREEVLKGNREKGLAFLGFSRKKPVITIMGGSLGAKKINETVRSALPELLKKYQIVHLCGKGNLDESLQNKEGYRQFEYVHGELPDILAVTDFVISRAGSNAIFEFLTLQKPMVLIPLSKFASRGDQILNAESFERQGYASVLYEEDVNVKSLIKYVEELSQNNEKYKTALKKYNGKEAIKTIIQNISEA.

UDP-N-acetyl-alpha-D-glucosamine is bound by residues 11–13, arginine 164, serine 194, and glutamine 289; that span reads SAG.

Belongs to the glycosyltransferase 28 family. MurG subfamily.

The protein resides in the cell membrane. The catalysed reaction is di-trans,octa-cis-undecaprenyl diphospho-N-acetyl-alpha-D-muramoyl-L-alanyl-D-glutamyl-meso-2,6-diaminopimeloyl-D-alanyl-D-alanine + UDP-N-acetyl-alpha-D-glucosamine = di-trans,octa-cis-undecaprenyl diphospho-[N-acetyl-alpha-D-glucosaminyl-(1-&gt;4)]-N-acetyl-alpha-D-muramoyl-L-alanyl-D-glutamyl-meso-2,6-diaminopimeloyl-D-alanyl-D-alanine + UDP + H(+). It functions in the pathway cell wall biogenesis; peptidoglycan biosynthesis. Cell wall formation. Catalyzes the transfer of a GlcNAc subunit on undecaprenyl-pyrophosphoryl-MurNAc-pentapeptide (lipid intermediate I) to form undecaprenyl-pyrophosphoryl-MurNAc-(pentapeptide)GlcNAc (lipid intermediate II). In Bacillus cereus (strain ATCC 14579 / DSM 31 / CCUG 7414 / JCM 2152 / NBRC 15305 / NCIMB 9373 / NCTC 2599 / NRRL B-3711), this protein is UDP-N-acetylglucosamine--N-acetylmuramyl-(pentapeptide) pyrophosphoryl-undecaprenol N-acetylglucosamine transferase 2.